Reading from the N-terminus, the 86-residue chain is Large ribosomal subunit protein bL31B (86 aa).

Belongs to the bacterial ribosomal protein bL31 family. Type B subfamily. As to quaternary structure, part of the 50S ribosomal subunit.

The protein is Large ribosomal subunit protein bL31B of Ralstonia pickettii (strain 12J).